A 92-amino-acid polypeptide reads, in one-letter code: Bombyxin A-5 (92 aa).

The first 19 residues, Met1–Thr19, serve as a signal peptide directing secretion. A Pyrrolidone carboxylic acid modification is found at Gln20. Disulfide bonds link Cys29–Cys79, Cys41–Cys92, and Cys78–Cys83. Residues Ser50–Gln71 constitute a propeptide, c peptide like.

It belongs to the insulin family. Heterodimer of a B chain and an A chain linked by two disulfide bonds.

The protein resides in the secreted. In terms of biological role, brain peptide responsible for activation of prothoracic glands to produce ecdysone in insects. This chain is Bombyxin A-5 (BBXA5), found in Bombyx mori (Silk moth).